The sequence spans 243 residues: UPF0246 protein Sez_1855 (243 aa).

It belongs to the UPF0246 family.

This chain is UPF0246 protein Sez_1855, found in Streptococcus equi subsp. zooepidemicus (strain MGCS10565).